A 114-amino-acid polypeptide reads, in one-letter code: Large ribosomal subunit protein uL22c (114 aa).

It belongs to the universal ribosomal protein uL22 family. Part of the 50S ribosomal subunit.

It localises to the plastid. Its subcellular location is the cyanelle. This protein binds specifically to 23S rRNA. In terms of biological role, the globular domain of the protein is located near the polypeptide exit tunnel on the outside of the subunit, while an extended beta-hairpin is found that lines the wall of the exit tunnel in the center of the 70S ribosome. In Cyanophora paradoxa, this protein is Large ribosomal subunit protein uL22c (rpl22).